The sequence spans 389 residues: MVSVSEIRQAQRAEGPATIMAIGTANPANCVEQSTYPDFYFKITNSEHKVELKEKFQRMCDKSMIKRRYMYLTEEILKENPSVCEYMAPSLDARQDMVVVEVPRLGKEAAVKAIKEWGQPKSKITHLIFCTTSGVDMPGADYQLTKLLGLRPYVKRYMMYQQGCFAGGTVLRLAKDLAENNKGARVLVVCSEVTAVTFRGPSDTHLDSLVGQALFGDGAAALIVGSDPIPEIEKPIFEMVWTAQTIAPDSEGAIDGHLREAGLTFHLLKDVPGIVSKNIDKALVEAFQPLNISDYNSIFWIAHPGGPAILDQVEQKLGLKPEKMKATREVLSEYGNMSSACVLFILDEMRKKSAQAGLKTTGEGLDWGVLFGFGPGLTIETVVLHSVAI.

Cysteine 164 is a catalytic residue.

This sequence belongs to the thiolase-like superfamily. Chalcone/stilbene synthases family.

It carries out the reaction (E)-4-coumaroyl-CoA + 3 malonyl-CoA + 3 H(+) = 2',4,4',6'-tetrahydroxychalcone + 3 CO2 + 4 CoA. It participates in secondary metabolite biosynthesis; flavonoid biosynthesis. In terms of biological role, the primary product of this enzyme is 4,2',4',6'-tetrahydroxychalcone (also termed naringenin-chalcone or chalcone) which can under specific conditions spontaneously isomerize into naringenin. The chain is Chalcone synthase 9 (CHS9) from Medicago sativa (Alfalfa).